The sequence spans 617 residues: pH-sensitive chloride channel 2 (617 aa).

Residues 1–28 (MHSPGAAAYVFLQCLVALVAAVIAQSGA) form the signal peptide. Over 29-387 (DQPPTTVVEV…VHLAREMGFY (359 aa)) the chain is Extracellular. A glycan (N-linked (GlcNAc...) asparagine) is linked at Asn57. The span at 82-96 (TVSVDSSSTTTVAST) shows a compositional bias: low complexity. Residues 82–110 (TVSVDSSSTTTVASTQEPTSTTERTMSPE) form a disordered region. Positions 97 to 106 (QEPTSTTERT) are enriched in polar residues. Asn130 carries N-linked (GlcNAc...) asparagine glycosylation. The segment covering 131–147 (ATDDNRPDAKSSGKDSE) has biased composition (basic and acidic residues). Positions 131-155 (ATDDNRPDAKSSGKDSECPTLEGAD) are disordered. 4 N-linked (GlcNAc...) asparagine glycosylation sites follow: Asn184, Asn234, Asn351, and Asn370. A helical membrane pass occupies residues 388 to 408 (MMDYFIPSIMLVAISWVTFWL). At 409–414 (QADQSA) the chain is on the cytoplasmic side. Residues 415 to 434 (PRITLGTSTMLTFITLASAQ) form a helical membrane-spanning segment. Residues 435 to 447 (GKTLPKVSYIKAS) are Extracellular-facing. Residues 448-468 (EIWFLGCTGFIFGSLVEFAFV) form a helical membrane-spanning segment. Residues 469 to 596 (NTIWRRKRNV…VAIWIDKRSR (128 aa)) are Cytoplasmic-facing. A helical membrane pass occupies residues 597-617 (FVFPIAFVIFNIFYWTFVYYV).

This sequence belongs to the ligand-gated ion channel (TC 1.A.9) family.

It is found in the cell membrane. It catalyses the reaction chloride(in) = chloride(out). Ligand and pH-gated channel that mediates chloride transport in the mid-gut and thereby may function in larval metabolism and fluid homeostasis. Channel opening is triggered by zinc binding or, to a lesser extent, an increase in extracellular pH. The protein is pH-sensitive chloride channel 2 of Anopheles gambiae (African malaria mosquito).